The sequence spans 860 residues: MQEQYRPEEIESKVQLHWDEKRTFEVTEDESKEKYYCLSMLPYPSGRLHMGHVRNYTIGDVIARYQRMLGKNVLQPIGWDAFGLPAEGAAVKNNTAPAPWTYDNIAYMKNQLKMLGFGYDWSRELATCTPEYYRWEQKFFTELYKKGLVYKKTSAVNWCPNDQTVLANEQVIDGCCWRCDTKVERKEIPQWFIKITAYADELLNDLDKLDHWPDTVKTMQRNWIGRSEGVEITFNVNDYDNTLTVYTTRPDTFMGCTYLAVAAGHPLAQKAAENNPELAAFIDECRNTKVAEAEMATMEKKGVDTGFKAVHPLTGEEIPVWAANFVLMEYGTGAVMAVPGHDQRDYEFASKYGLNIKPVILAADGSEPDLSQQALTEKGVLFNSGEFNGLDHEAAFNAIADKLTAMGVGERKVNYRLRDWGVSRQRYWGAPIPMVTLEDGTVMPTPDDQLPVILPEDVVMDGITSPIKADPEWAKTTVNGMPALRETDTFDTFMESSWYYARYTCPEYKEGMLDSKAANYWLPVDIYIGGIEHAIMHLLYFRFFHKLMRDAGMVNSDEPAKQLLCQGMVLADAFYYVGENGERNWVSPVDAIVERDEKGRIVKAKDAAGHELVYTGMSKMSKSKNNGIDPQVMVERYGADTVRLFMMFASPADMTLEWQESGVEGANRFLKRVWKLVYEHTAKGDVAALNVDALTEDQKALRRDVHKTIAKVTDDIGRRQTFNTAIAAIMELMNKLAKAPTDGEQDRALMQEALLAVVRMLNPFTPHICFTLWQELKGEGDIDNAPWPVADEKAMVEDSTLVVVQVNGKVRAKITVPVDATEEQVRERAGQKHLVAKYLDGVTVRKVIYVPGKLLNLVVG.

A 'HIGH' region motif is present at residues 42-52 (PYPSGRLHMGH). Positions 619 to 623 (KMSKS) match the 'KMSKS' region motif. Lysine 622 contacts ATP.

Belongs to the class-I aminoacyl-tRNA synthetase family.

The protein resides in the cytoplasm. It catalyses the reaction tRNA(Leu) + L-leucine + ATP = L-leucyl-tRNA(Leu) + AMP + diphosphate. This Escherichia coli O6:K15:H31 (strain 536 / UPEC) protein is Leucine--tRNA ligase.